The following is a 299-amino-acid chain: Somaliensene A/B synthase (299 aa).

7 consecutive transmembrane segments (helical) span residues 32–49, 56–72, 110–132, 153–171, 177–194, 222–241, and 247–269; these read WTTL…AVHT, TAVA…LFVY, IAVR…ALLW, LYAG…EIVA, AWRW…LMSV, VFLC…FLMA, and WWIV…RVVL.

It belongs to the UbiA prenyltransferase family. Requires Mg(2+) as cofactor.

Its subcellular location is the cell membrane. It carries out the reaction (2E,6E,10E,14E)-geranylfarnesyl diphosphate = somaliensene A + diphosphate. It catalyses the reaction (2E,6E,10E,14E)-geranylfarnesyl diphosphate = (-)-somaliensene B + diphosphate. It participates in secondary metabolite biosynthesis; terpenoid biosynthesis. Its function is as follows. Sesterterpene cyclase, which converts geranylfarnesyl diphosphate (GFPP) into the terpenes somaliensene A and somaliensene B. This is Somaliensene A/B synthase from Streptomyces somaliensis (strain ATCC 33201 / DSM 40738 / JCM 12659 / KCTC 9044 / NCTC 11332 / NRRL B-12077 / IP 733).